A 146-amino-acid chain; its full sequence is Large ribosomal subunit protein uL15 (146 aa).

A compositionally biased stretch (basic and acidic residues) spans 1 to 18; that stretch reads MKLHELKAAEGTRKERNR. Residues 1-58 are disordered; that stretch reads MKLHELKAAEGTRKERNRVGRGMSSGNGKTSGRGHKGQKARSGGGVRPGFEGGQMPLF. The segment covering 42–52 has biased composition (gly residues); sequence SGGGVRPGFEG.

It belongs to the universal ribosomal protein uL15 family. In terms of assembly, part of the 50S ribosomal subunit.

Binds to the 23S rRNA. This Oceanobacillus iheyensis (strain DSM 14371 / CIP 107618 / JCM 11309 / KCTC 3954 / HTE831) protein is Large ribosomal subunit protein uL15.